A 411-amino-acid chain; its full sequence is Gamma-glutamyl phosphate reductase (411 aa).

It belongs to the gamma-glutamyl phosphate reductase family.

The protein localises to the cytoplasm. The catalysed reaction is L-glutamate 5-semialdehyde + phosphate + NADP(+) = L-glutamyl 5-phosphate + NADPH + H(+). It functions in the pathway amino-acid biosynthesis; L-proline biosynthesis; L-glutamate 5-semialdehyde from L-glutamate: step 2/2. In terms of biological role, catalyzes the NADPH-dependent reduction of L-glutamate 5-phosphate into L-glutamate 5-semialdehyde and phosphate. The product spontaneously undergoes cyclization to form 1-pyrroline-5-carboxylate. The sequence is that of Gamma-glutamyl phosphate reductase from Wolinella succinogenes (strain ATCC 29543 / DSM 1740 / CCUG 13145 / JCM 31913 / LMG 7466 / NCTC 11488 / FDC 602W) (Vibrio succinogenes).